The sequence spans 892 residues: Putative VWFA domain-containing protein ORF892 (892 aa).

The tract at residues 109–548 is disordered; sequence EEQLQRRPQR…RGYAHGDEDL (440 aa). Residues 129–142 are compositionally biased toward polar residues; sequence SEVANQRVSRSAEN. Residues 143 to 162 are compositionally biased toward basic and acidic residues; the sequence is QGKRGNEEKQQQKTPGKTEE. A compositionally biased stretch (acidic residues) spans 169–184; that stretch reads ESGEEGNQQEESGEEQ. Residues 185 to 196 show a composition bias toward basic and acidic residues; it reads EGVKGSRSKQRE. Positions 212-223 are enriched in acidic residues; the sequence is ESGESESEEGQS. Low complexity-rich tracts occupy residues 224–238 and 271–283; these read SEET…GNQQ and GNGQ…AQNG. A compositionally biased stretch (acidic residues) spans 287–300; the sequence is GESEGEITESESAS. The span at 301–323 shows a compositional bias: low complexity; sequence EEQTGSKGKSGQQGEEGQQQSGS. Acidic residues-rich tracts occupy residues 324–336 and 425–448; these read EGEE…ESGE and SESE…ETEE. Residues 453–466 are compositionally biased toward low complexity; sequence SEAEGTAAEGEVGQ. Polar residues-rich tracts occupy residues 467–481 and 512–531; these read PSEQ…SGQR and QTGS…QQGE. Residues 536-546 are compositionally biased toward basic and acidic residues; the sequence is EGGRGYAHGDE. The stretch at 553–620 forms a coiled coil; sequence QEINSILQTL…VQKLLKDLNV (68 aa). Positions 723 to 892 constitute a VWFA domain; the sequence is DFLFVIDSSG…GNIVLKRLVH (170 aa).

In Acidianus two-tailed virus (ATV), this protein is Putative VWFA domain-containing protein ORF892.